The chain runs to 785 residues: Gamma-interferon-inducible protein 16 (785 aa).

The 88-residue stretch at 5–92 (YKNIVLLKGL…KKEKLKAKGL (88 aa)) folds into the Pyrin domain. Lys-45 is subject to N6-acetyllysine. The segment covering 88–99 (KAKGLAPSRKRK) has biased composition (basic residues). Positions 88–196 (KAKGLAPSRK…TVAKCQATPR (109 aa)) are disordered. At Ser-95 the chain carries Phosphoserine. The Nuclear localization signal signature appears at 96–100 (RKRKK). Lys-99 bears the N6-acetyllysine mark. Residues 104 to 114 (AASPAPSTSST) show a composition bias toward low complexity. Ser-106 is modified (phosphoserine). A Glycyl lysine isopeptide (Lys-Gly) (interchain with G-Cter in SUMO2) cross-link involves residue Lys-116. Lys-128 bears the N6-acetyllysine; alternate mark. A Glycyl lysine isopeptide (Lys-Gly) (interchain with G-Cter in SUMO2); alternate cross-link involves residue Lys-128. Short sequence motifs (nuclear localization signal) lie at residues 128-131 (KRKK), 134-136 (KEK), and 140-143 (KGSK). The segment covering 166-182 (SPSPKTSSSAPPNTSST) has biased composition (low complexity). Residues Ser-168 and Ser-174 each carry the phosphoserine modification. The interval 192 to 393 (QATPRRSVLQ…SFIQIKKKTN (202 aa)) is interaction with TP53 C-terminus. The region spanning 193 to 393 (ATPRRSVLQK…SFIQIKKKTN (201 aa)) is the HIN-200 1 domain. The residue at position 214 (Lys-214) is an N6-acetyllysine. Positions 388-442 (IKKKTNPRNNDPKSMKLPQEQSQLPNPSEAGTTFPESHLWTPQMPPTTPSSSFFT) are disordered. Over residues 406-422 (QEQSQLPNPSEAGTTFP) the composition is skewed to polar residues. An N6-acetyllysine mark is found at Lys-444 and Lys-451. Residues 566–765 (EVSIEDSAQS…SHIKVIKTRK (200 aa)) enclose the HIN-200 2 domain. The segment at 571–766 (DSAQSDLKEV…HIKVIKTRKN (196 aa)) is interaction with TP53 core domain. Ser-575 carries the post-translational modification Phosphoserine. An N6-acetyllysine mark is found at Lys-598 and Lys-614. Lys-683 participates in a covalent cross-link: Glycyl lysine isopeptide (Lys-Gly) (interchain with G-Cter in SUMO2). A Phosphoserine modification is found at Ser-780.

Belongs to the HIN-200 family. As to quaternary structure, forms homooligomers. Interacts with TMEM173, AIM2, PYCARD and CASP1. Interacts with BRCA1, TP53, E2F1, RB1 and SP1. Interacts with MTA1. Interacts with MTA1. Interacts with PYDC5. Lysine acetylation in the multipartite nuclear localization signal (NLS) regulates the subcellular location. Post-translationally, phosphorylated on Ser and Thr.

It is found in the nucleus. Its subcellular location is the cytoplasm. Binds double-stranded DNA. Binds preferentially to supercoiled DNA and cruciform DNA structures. Seems to be involved in transcriptional regulation. May function as a transcriptional repressor. Could have a role in the regulation of hematopoietic differentiation through activation of unknown target genes. Controls cellular proliferation by modulating the functions of cell cycle regulatory factors including p53/TP53 and the retinoblastoma protein. May be involved in TP53-mediated transcriptional activation by enhancing TP53 sequence-specific DNA binding and modulating TP53 phosphorylation status. Seems to be involved in energy-level-dependent activation of the ATM/ AMPK/TP53 pathway coupled to regulation of autophagy. May be involved in regulation of TP53-mediated cell death also involving BRCA1. May be involved in the senescence of prostate epithelial cells. Involved in innate immune response by recognizing viral dsDNA in the cytosol and probably in the nucleus. After binding to viral DNA in the cytoplasm recruits TMEM173/STING and mediates the induction of IFN-beta. Has anti-inflammatory activity and inhibits the activation of the AIM2 inflammasome, probably via association with AIM2. Proposed to bind viral DNA in the nucleus and to induce the formation of nuclear caspase-1-activating inflammasome formation via association with PYCARD. Inhibits replication of herpesviruses probably by interfering with promoter recruitment of members of the Sp1 family of transcription factors. This Pongo abelii (Sumatran orangutan) protein is Gamma-interferon-inducible protein 16 (IFI16).